A 160-amino-acid chain; its full sequence is Prostaglandin E synthase 3 (160 aa).

In terms of domain architecture, CS spans 1-90; that stretch reads MQPASAKWYD…ESGQSWPRLT (90 aa). Lys-33 carries the post-translational modification N6-acetyllysine. Lys-35 participates in a covalent cross-link: Glycyl lysine isopeptide (Lys-Gly) (interchain with G-Cter in SUMO2). Ser-44 carries the post-translational modification Phosphoserine. Lys-65 is covalently cross-linked (Glycyl lysine isopeptide (Lys-Gly) (interchain with G-Cter in SUMO2)). Phosphoserine occurs at positions 85, 100, 113, 118, 148, and 151. Positions 124–160 are disordered; that stretch reads SEMMNNMGGDEDVDLPEVDGADDDSQDSDDEKMPDLE. Residues 132 to 153 are compositionally biased toward acidic residues; the sequence is GDEDVDLPEVDGADDDSQDSDD. Residues 157–160 carry the PXLE motif motif; it reads PDLE.

It belongs to the p23/wos2 family. In terms of assembly, probably forms a complex composed of chaperones HSP90 and HSP70, co-chaperones STIP1/HOP, CDC37, PPP5C, PTGES3/p23, TSC1 and client protein TSC2. Binds to the progesterone receptor. Interacts with TERT; the interaction, together with HSP90AA1, is required for correct assembly and stabilization of the telomerase holoenzyme complex. Interacts (via PXLE motif) with EGLN1/PHD2, recruiting EGLN1/PHD2 to the HSP90 pathway to facilitate HIF alpha proteins hydroxylation. Interacts with HSP90AA1, FLCN, FNIP1 and FNIP2. Proteolytically cleaved by caspase-7 (CASP7) in response to apoptosis, leading to its inactivation. In terms of tissue distribution, detected in testis and ovary, at lower levels in endometrium, myometrium, kidney and lung, and only faintly in spleen, heart and muscle (at protein level). Expressed at high levels in glandular and luminal epithelial cells of the endometrium, but also detected in stromal cells (at protein level).

It localises to the cytoplasm. It carries out the reaction prostaglandin H2 = prostaglandin E2. Its pathway is lipid metabolism; prostaglandin biosynthesis. Its function is as follows. Cytosolic prostaglandin synthase that catalyzes the oxidoreduction of prostaglandin endoperoxide H2 (PGH2) to prostaglandin E2 (PGE2). Molecular chaperone that localizes to genomic response elements in a hormone-dependent manner and disrupts receptor-mediated transcriptional activation, by promoting disassembly of transcriptional regulatory complexes. Facilitates HIF alpha proteins hydroxylation via interaction with EGLN1/PHD2, leading to recruit EGLN1/PHD2 to the HSP90 pathway. The protein is Prostaglandin E synthase 3 (PTGES3) of Bos taurus (Bovine).